Here is a 278-residue protein sequence, read N- to C-terminus: Large ribosomal subunit protein uL2 (278 aa).

The segment at 201-278 (HGNINDGKAG…IMRSRHQRKK (78 aa)) is disordered. Residues 210-221 (GRSRWRGKRPHV) are compositionally biased toward basic residues.

It belongs to the universal ribosomal protein uL2 family. Part of the 50S ribosomal subunit. Forms a bridge to the 30S subunit in the 70S ribosome.

Functionally, one of the primary rRNA binding proteins. Required for association of the 30S and 50S subunits to form the 70S ribosome, for tRNA binding and peptide bond formation. It has been suggested to have peptidyltransferase activity; this is somewhat controversial. Makes several contacts with the 16S rRNA in the 70S ribosome. This chain is Large ribosomal subunit protein uL2, found in Sinorhizobium fredii (strain NBRC 101917 / NGR234).